The chain runs to 131 residues: MKRKMLKSKIHRATVTGADLHYEGSITIDSELMKQADILPYEAVDIWNVTYGTRFQTYAIEGQPGSGVICINGAAARMVSKGDMVIIASWIDIDADKAAAYEPKLVFVDDKNVPTTQKSENPGQGSLRNAI.

The active-site Schiff-base intermediate with substrate; via pyruvic acid is the S25. S25 is modified (pyruvic acid (Ser)). T57 is a binding site for substrate. The active-site Proton donor is the Y58. 73 to 75 (GAA) contacts substrate. Residues 112-131 (NVPTTQKSENPGQGSLRNAI) form a disordered region. Residues 113–131 (VPTTQKSENPGQGSLRNAI) are compositionally biased toward polar residues.

Belongs to the PanD family. In terms of assembly, heterooctamer of four alpha and four beta subunits. The cofactor is pyruvate. Post-translationally, is synthesized initially as an inactive proenzyme, which is activated by self-cleavage at a specific serine bond to produce a beta-subunit with a hydroxyl group at its C-terminus and an alpha-subunit with a pyruvoyl group at its N-terminus.

The protein localises to the cytoplasm. The catalysed reaction is L-aspartate + H(+) = beta-alanine + CO2. The protein operates within cofactor biosynthesis; (R)-pantothenate biosynthesis; beta-alanine from L-aspartate: step 1/1. In terms of biological role, catalyzes the pyruvoyl-dependent decarboxylation of aspartate to produce beta-alanine. The protein is Aspartate 1-decarboxylase of Syntrophotalea carbinolica (strain DSM 2380 / NBRC 103641 / GraBd1) (Pelobacter carbinolicus).